The primary structure comprises 156 residues: Small ribosomal subunit protein uS7 (156 aa).

It belongs to the universal ribosomal protein uS7 family. In terms of assembly, part of the 30S ribosomal subunit. Contacts proteins S9 and S11.

One of the primary rRNA binding proteins, it binds directly to 16S rRNA where it nucleates assembly of the head domain of the 30S subunit. Is located at the subunit interface close to the decoding center, probably blocks exit of the E-site tRNA. This is Small ribosomal subunit protein uS7 from Lactobacillus johnsonii (strain CNCM I-12250 / La1 / NCC 533).